A 2390-amino-acid polypeptide reads, in one-letter code: Spectrin beta chain, non-erythrocytic 2 (2390 aa).

The residue at position 2 (S2) is an N-acetylserine. The actin-binding stretch occupies residues 2–278 (SSTLSPTDFD…IITYVATYYH (277 aa)). A phosphoserine mark is found at S6 and S31. 2 consecutive Calponin-homology (CH) domains span residues 57 to 161 (AVQK…LRFQ) and 176 to 281 (KSAK…HYFS). Spectrin repeat units follow at residues 306-414 (LVEK…LALR), 427-527 (AARF…RERL), 532-639 (ELQK…RLEE), 642-744 (RLWR…QRLA), 749-849 (LYQF…RALE), and 855-954 (YTML…KAAL). Phosphoserine is present on S959. Spectrin repeat units follow at residues 960-1063 (IQNY…SLGE), 1066-1169 (RLQD…GRLA), 1174-1262 (FQGF…RHKK), 1279-1379 (EQQH…ARSL), 1384-1485 (RAEL…RRLQ), 1489-1586 (EQHQ…RLED), 1589-1692 (RAQQ…RLQE), 1696-1797 (LCQL…GQVL), 1801-1904 (YELQ…QLLL), 1910-2010 (FRFF…DWLQ), and 2017-2076 (VFGR…EKLT). S1073 carries the phosphoserine modification. The segment covering 2081–2096 (REKERKRKREEEERRK) has biased composition (basic and acidic residues). Disordered stretches follow at residues 2081–2222 (REKE…EQME) and 2331–2390 (SSAS…KKNK). Residues 2116 to 2125 (QTASDTTWDG) show a composition bias toward polar residues. Phosphoserine is present on residues S2171 and S2199. A PH domain is found at 2218–2328 (QEQMEGMLCR…WLRVVNAAIA (111 aa)). T2354 carries the post-translational modification Phosphothreonine. A Phosphoserine modification is found at S2359. Basic and acidic residues predominate over residues 2370–2383 (RSKDGREREREKRF).

It belongs to the spectrin family. Highly expressed in brain, kidney, pancreas, and liver, and at lower levels in lung and placenta.

The protein resides in the cytoplasm. It is found in the cytoskeleton. It localises to the cell cortex. Functionally, probably plays an important role in neuronal membrane skeleton. This is Spectrin beta chain, non-erythrocytic 2 (SPTBN2) from Homo sapiens (Human).